Here is a 233-residue protein sequence, read N- to C-terminus: tRNA (guanine-N(7)-)-methyltransferase (233 aa).

A disordered region spans residues methionine 1 to lysine 21. Positions 64, 89, 116, and 138 each coordinate S-adenosyl-L-methionine. Aspartate 138 is an active-site residue. Substrate is bound by residues lysine 142, aspartate 174, and threonine 212–glutamate 215.

This sequence belongs to the class I-like SAM-binding methyltransferase superfamily. TrmB family.

The enzyme catalyses guanosine(46) in tRNA + S-adenosyl-L-methionine = N(7)-methylguanosine(46) in tRNA + S-adenosyl-L-homocysteine. The protein operates within tRNA modification; N(7)-methylguanine-tRNA biosynthesis. In terms of biological role, catalyzes the formation of N(7)-methylguanine at position 46 (m7G46) in tRNA. This Brucella anthropi (strain ATCC 49188 / DSM 6882 / CCUG 24695 / JCM 21032 / LMG 3331 / NBRC 15819 / NCTC 12168 / Alc 37) (Ochrobactrum anthropi) protein is tRNA (guanine-N(7)-)-methyltransferase.